We begin with the raw amino-acid sequence, 98 residues long: Large ribosomal subunit protein uL23 (98 aa).

This sequence belongs to the universal ribosomal protein uL23 family. As to quaternary structure, part of the 50S ribosomal subunit. Contacts protein L29, and trigger factor when it is bound to the ribosome.

Its function is as follows. One of the early assembly proteins it binds 23S rRNA. One of the proteins that surrounds the polypeptide exit tunnel on the outside of the ribosome. Forms the main docking site for trigger factor binding to the ribosome. In Limosilactobacillus reuteri (strain DSM 20016) (Lactobacillus reuteri), this protein is Large ribosomal subunit protein uL23.